Consider the following 136-residue polypeptide: Small ribosomal subunit protein uS12 (136 aa).

At D89 the chain carries 3-methylthioaspartic acid. The disordered stretch occupies residues 104–136; that stretch reads TAGVNGRTQRRSKYGAKRPKPGQAAAAAKGKKK. Residues 111-123 show a composition bias toward basic residues; sequence TQRRSKYGAKRPK. Low complexity predominate over residues 124-136; that stretch reads PGQAAAAAKGKKK.

It belongs to the universal ribosomal protein uS12 family. As to quaternary structure, part of the 30S ribosomal subunit. Contacts proteins S8 and S17. May interact with IF1 in the 30S initiation complex.

In terms of biological role, with S4 and S5 plays an important role in translational accuracy. Functionally, interacts with and stabilizes bases of the 16S rRNA that are involved in tRNA selection in the A site and with the mRNA backbone. Located at the interface of the 30S and 50S subunits, it traverses the body of the 30S subunit contacting proteins on the other side and probably holding the rRNA structure together. The combined cluster of proteins S8, S12 and S17 appears to hold together the shoulder and platform of the 30S subunit. In Parabacteroides distasonis (strain ATCC 8503 / DSM 20701 / CIP 104284 / JCM 5825 / NCTC 11152), this protein is Small ribosomal subunit protein uS12.